The following is a 314-amino-acid chain: Methionyl-tRNA formyltransferase (314 aa).

110–113 (SLLP) is a (6S)-5,6,7,8-tetrahydrofolate binding site.

Belongs to the Fmt family.

It carries out the reaction L-methionyl-tRNA(fMet) + (6R)-10-formyltetrahydrofolate = N-formyl-L-methionyl-tRNA(fMet) + (6S)-5,6,7,8-tetrahydrofolate + H(+). Functionally, attaches a formyl group to the free amino group of methionyl-tRNA(fMet). The formyl group appears to play a dual role in the initiator identity of N-formylmethionyl-tRNA by promoting its recognition by IF2 and preventing the misappropriation of this tRNA by the elongation apparatus. This chain is Methionyl-tRNA formyltransferase, found in Lactobacillus acidophilus (strain ATCC 700396 / NCK56 / N2 / NCFM).